A 688-amino-acid polypeptide reads, in one-letter code: Glycine--tRNA ligase beta subunit (688 aa).

It belongs to the class-II aminoacyl-tRNA synthetase family. As to quaternary structure, tetramer of two alpha and two beta subunits.

The protein localises to the cytoplasm. It catalyses the reaction tRNA(Gly) + glycine + ATP = glycyl-tRNA(Gly) + AMP + diphosphate. In Aliivibrio fischeri (strain MJ11) (Vibrio fischeri), this protein is Glycine--tRNA ligase beta subunit.